Here is a 375-residue protein sequence, read N- to C-terminus: tRNA-specific 2-thiouridylase MnmA (375 aa).

ATP-binding positions include 17 to 24 (GMSGGVDS) and Met43. The interaction with target base in tRNA stretch occupies residues 103-105 (NPD). The active-site Nucleophile is Cys108. Cys108 and Cys204 are disulfide-bonded. Gly132 is a binding site for ATP. The interval 154–156 (KDQ) is interaction with tRNA. Residue Cys204 is the Cysteine persulfide intermediate of the active site. The interaction with tRNA stretch occupies residues 316 to 317 (RY).

This sequence belongs to the MnmA/TRMU family.

It is found in the cytoplasm. The catalysed reaction is S-sulfanyl-L-cysteinyl-[protein] + uridine(34) in tRNA + AH2 + ATP = 2-thiouridine(34) in tRNA + L-cysteinyl-[protein] + A + AMP + diphosphate + H(+). Functionally, catalyzes the 2-thiolation of uridine at the wobble position (U34) of tRNA, leading to the formation of s(2)U34. The sequence is that of tRNA-specific 2-thiouridylase MnmA from Stutzerimonas stutzeri (strain A1501) (Pseudomonas stutzeri).